Here is a 920-residue protein sequence, read N- to C-terminus: Isoleucine--tRNA ligase (920 aa).

Residues 58-68 (PYANGHLHLGH) carry the 'HIGH' region motif. An L-isoleucyl-5'-AMP-binding site is contributed by glutamate 569. The short motif at 610–614 (KMSKS) is the 'KMSKS' region element. Residue lysine 613 coordinates ATP. Residues cysteine 895, cysteine 898, cysteine 910, and cysteine 913 each contribute to the Zn(2+) site.

The protein belongs to the class-I aminoacyl-tRNA synthetase family. IleS type 1 subfamily. As to quaternary structure, monomer. Zn(2+) serves as cofactor.

Its subcellular location is the cytoplasm. It carries out the reaction tRNA(Ile) + L-isoleucine + ATP = L-isoleucyl-tRNA(Ile) + AMP + diphosphate. Its function is as follows. Catalyzes the attachment of isoleucine to tRNA(Ile). As IleRS can inadvertently accommodate and process structurally similar amino acids such as valine, to avoid such errors it has two additional distinct tRNA(Ile)-dependent editing activities. One activity is designated as 'pretransfer' editing and involves the hydrolysis of activated Val-AMP. The other activity is designated 'posttransfer' editing and involves deacylation of mischarged Val-tRNA(Ile). This chain is Isoleucine--tRNA ligase, found in Helicobacter pylori (strain P12).